A 2193-amino-acid chain; its full sequence is Genome polyprotein (2193 aa).

The disordered stretch occupies residues 1–22; the sequence is MGSQVSTQRSGSHENSNSATEG. Gly2 carries the N-myristoyl glycine; by host lipid modification. At 2–1503 the chain is on the cytoplasmic side; sequence GSQVSTQRSG…HLNRAVLVMQ (1502 aa). The amphipathic alpha-helix stretch occupies residues 568–588; sequence RVADVIESSIGDSVSRALTQA. Residues His883 and Asp901 each act as for protease 2A activity in the active site. Cys918 and Cys920 together coordinate Zn(2+). Catalysis depends on Cys972, which acts as the For protease 2A activity. Cys978 and His980 together coordinate Zn(2+). The 159-residue stretch at 1216 to 1374 folds into the SF3 helicase domain; sequence EKRMNNYMQF…SKTDLGRLDA (159 aa). 1240 to 1247 contacts ATP; sequence GSPGTGKS. Positions 1381, 1392, and 1397 each coordinate Zn(2+). The segment at 1381–1397 adopts a C4-type; degenerate zinc-finger fold; sequence CSENNTANFKRCSPLVC. Residues 1504–1519 lie within the membrane without spanning it; that stretch reads SIATVVAVVSLVYVIY. At 1520–2193 the chain is on the cytoplasmic side; it reads KLFAGFQGAY…NLRRNWLELF (674 aa). Tyr1529 bears the O-(5'-phospho-RNA)-tyrosine mark. The region spanning 1549–1727 is the Peptidase C3 domain; that stretch reads GPSLDFALSL…FCAGLKRSYF (179 aa). Active-site for protease 3C activity residues include His1588, Glu1619, and Cys1695. The RdRp catalytic domain occupies 1958–2073; sequence GSLFAFDYSG…ASYPFPIDCL (116 aa). Mg(2+) is bound by residues Asp1964 and Asp2060.

It belongs to the picornaviruses polyprotein family. Interacts with capsid protein VP1 and capsid protein VP3 to form heterotrimeric protomers. In terms of assembly, interacts with capsid protein VP0, and capsid protein VP3 to form heterotrimeric protomers. Five protomers subsequently associate to form pentamers which serve as building blocks for the capsid. Interacts with capsid protein VP2, capsid protein VP3 and capsid protein VP4 following cleavage of capsid protein VP0. Interacts with host SCARB2. Interacts with host ARF6; this interaction mediates viral endocytosis. As to quaternary structure, interacts with capsid protein VP1 and capsid protein VP3 in the mature capsid. Interacts with host SCARB2. Interacts with capsid protein VP0 and capsid protein VP1 to form heterotrimeric protomers. Five protomers subsequently associate to form pentamers which serve as building blocks for the capsid. Interacts with capsid protein VP4 in the mature capsid. Interacts with protein 2C; this interaction may be important for virion morphogenesis. In terms of assembly, interacts with capsid protein VP1 and capsid protein VP3. As to quaternary structure, homodimer. Interacts with host BAX; this interaction activates the mitochondrial apoptotic pathway. Interacts with host ILF2. In terms of assembly, homohexamer; forms a hexameric ring structure with 6-fold symmetry characteristic of AAA+ ATPases. Interacts (via N-terminus) with host RTN3 (via reticulon domain); this interaction is important for viral replication. Interacts with capsid protein VP3; this interaction may be important for virion morphogenesis. As to quaternary structure, interacts with protein 3CD. Homodimer. Interacts with host GBF1. Interacts (via GOLD domain) with host ACBD3 (via GOLD domain); this interaction allows the formation of a viral protein 3A/ACBD3 heterotetramer with a 2:2 stoichiometry, which will stimulate the recruitment of host PI4KB in order to synthesize PI4P at the viral RNA replication sites. In terms of assembly, interacts with RNA-directed RNA polymerase. As to quaternary structure, interacts with host IFIH1/MDA5; this interaction inhibits host IFIH1. Interacts with protein 3AB and with RNA-directed RNA polymerase. In terms of assembly, interacts with Viral protein genome-linked and with protein 3CD. Requires Mg(2+) as cofactor. Post-translationally, specific enzymatic cleavages in vivo by the viral proteases yield processing intermediates and the mature proteins. Myristoylation is required for the formation of pentamers during virus assembly. Further assembly of 12 pentamers and a molecule of genomic RNA generates the provirion. In terms of processing, during virion maturation, immature virions are rendered infectious following cleavage of VP0 into VP4 and VP2. This maturation seems to be an autocatalytic event triggered by the presence of RNA in the capsid and it is followed by a conformational change infectious virion. Post-translationally, myristoylation is required during RNA encapsidation and formation of the mature virus particle. VPg is uridylylated by the polymerase into VPg-pUpU. This acts as a nucleotide-peptide primer for the genomic RNA replication.

It is found in the virion. The protein localises to the host cytoplasm. Its subcellular location is the host cytoplasmic vesicle membrane. The protein resides in the host nucleus. It carries out the reaction a ribonucleoside 5'-triphosphate + H2O = a ribonucleoside 5'-diphosphate + phosphate + H(+). It catalyses the reaction Selective cleavage of Tyr-|-Gly bond in the picornavirus polyprotein.. The enzyme catalyses RNA(n) + a ribonucleoside 5'-triphosphate = RNA(n+1) + diphosphate. The catalysed reaction is Selective cleavage of Gln-|-Gly bond in the poliovirus polyprotein. In other picornavirus reactions Glu may be substituted for Gln, and Ser or Thr for Gly.. With respect to regulation, replication or transcription is subject to high level of random mutations by the nucleotide analog ribavirin. In terms of biological role, forms an icosahedral capsid of pseudo T=3 symmetry with capsid proteins VP2 and VP3. The capsid is 300 Angstroms in diameter, composed of 60 copies of each capsid protein and enclosing the viral positive strand RNA genome. Capsid protein VP1 mainly forms the vertices of the capsid. Capsid protein VP1, together with VP2, interacts with host cell receptor SCARB2 to provide virion attachment to target host cells. This attachment induces virion internalization. After binding to its receptor, the capsid undergoes conformational changes. Capsid protein VP1 N-terminus (that contains an amphipathic alpha-helix) and capsid protein VP4 are externalized. Together, they shape a pore in the host membrane through which viral genome is translocated to host cell cytoplasm. Its function is as follows. Forms an icosahedral capsid of pseudo T=3 symmetry with capsid proteins VP2 and VP3. The capsid is 300 Angstroms in diameter, composed of 60 copies of each capsid protein and enclosing the viral positive strand RNA genome. Capsid protein VP2, together with VP1, interacts with host cell receptor SCARB2 to provide virion attachment to target host cells. Forms an icosahedral capsid of pseudo T=3 symmetry with capsid proteins VP2 and VP3. The capsid is 300 Angstroms in diameter, composed of 60 copies of each capsid protein and enclosing the viral positive strand RNA genome. Functionally, lies on the inner surface of the capsid shell. After binding to the host receptor, the capsid undergoes conformational changes. Capsid protein VP4 is released, Capsid protein VP1 N-terminus is externalized, and together, they shape a pore in the host membrane through which the viral genome is translocated into the host cell cytoplasm. In terms of biological role, component of immature procapsids, which is cleaved into capsid proteins VP4 and VP2 after maturation. Allows the capsid to remain inactive before the maturation step. Its function is as follows. Cysteine protease that cleaves viral polyprotein and specific host proteins. It is responsible for the autocatalytic cleavage between the P1 and P2 regions, which is the first cleavage occurring in the polyprotein. Also cleaves the host translation initiation factor EIF4G1, in order to shut down the capped cellular mRNA translation. Inhibits the host nucleus-cytoplasm protein and RNA trafficking by cleaving host members of the nuclear pores. Counteracts stress granule formation probably by antagonizing its assembly or promoting its dissassembly. Cleaves and inhibits host IFIH1/MDA5, thereby inhibiting the type-I IFN production and the establishment of the antiviral state. Cleaves and inhibits host MAVS, thereby inhibiting the type-I IFN production and the establishment of the antiviral state. Plays an essential role in the virus replication cycle by acting as a viroporin. Creates a pore in the host endoplasmic reticulum and as a consequence releases Ca2+ in the cytoplasm of infected cell. In turn, high levels of cytoplasmic calcium may trigger membrane trafficking and transport of viral ER-associated proteins to viroplasms, sites of viral genome replication. Functionally, induces and associates with structural rearrangements of intracellular membranes. Displays RNA-binding, nucleotide binding and NTPase activities. May play a role in virion morphogenesis and viral RNA encapsidation by interacting with the capsid protein VP3. In terms of biological role, localizes the viral replication complex to the surface of membranous vesicles. Together with protein 3CD binds the Cis-Active RNA Element (CRE) which is involved in RNA synthesis initiation. Acts as a cofactor to stimulate the activity of 3D polymerase, maybe through a nucleid acid chaperone activity. Its function is as follows. Localizes the viral replication complex to the surface of membranous vesicles. It inhibits host cell endoplasmic reticulum-to-Golgi apparatus transport and causes the disassembly of the Golgi complex, possibly through GBF1 interaction. This would result in depletion of MHC, trail receptors and IFN receptors at the host cell surface. Plays an essential role in viral RNA replication by recruiting ACBD3 and PI4KB at the viral replication sites, thereby allowing the formation of the rearranged membranous structures where viral replication takes place. Acts as a primer for viral RNA replication and remains covalently bound to viral genomic RNA. VPg is uridylylated prior to priming replication into VPg-pUpU. The oriI viral genomic sequence may act as a template for this. The VPg-pUpU is then used as primer on the genomic RNA poly(A) by the RNA-dependent RNA polymerase to replicate the viral genome. During genome replication, the VPg-RNA linkage is removed by the host TDP2, thereby accelerating replication. During the late stage of the replication cycle, host TDP2 is excluded from sites of viral RNA synthesis and encapsidation, allowing for the generation of progeny virions. Functionally, involved in the viral replication complex and viral polypeptide maturation. It exhibits protease activity with a specificity and catalytic efficiency that is different from protease 3C. Protein 3CD lacks polymerase activity. Protein 3CD binds to the 5'UTR of the viral genome. In terms of biological role, major viral protease that mediates proteolytic processing of the polyprotein. Cleaves host EIF5B, contributing to host translation shutoff. Also cleaves host PABPC1, contributing to host translation shutoff. Disassembles host cytoplasmic stress granules by cleaving host G3BP1, although this effect is less prononced than the inhibition induced by protease 2A. Cleaves host RIGI and thus contributes to the inhibition of type I interferon production. Cleaves host IRF7 and thus contributes to the inhibition of type I interferon production. Cleaves host HNRNPA1 thereby increasing the translation of apoptosis protease activating factor APAF1, leading to apoptosis of the host cell. Cleaves host NLRP1, triggers host N-glycine-mediated degradation of the autoinhibitory NLRP1 N-terminal fragment. Its function is as follows. Replicates the viral genomic RNA on the surface of intracellular membranes. May form linear arrays of subunits that propagate along a strong head-to-tail interaction called interface-I. Covalently attaches UMP to a tyrosine of VPg, which is used to prime RNA synthesis. The positive stranded RNA genome is first replicated at virus induced membranous vesicles, creating a dsRNA genomic replication form. This dsRNA is then used as template to synthesize positive stranded RNA genomes. ss(+)RNA genomes are either translated, replicated or encapsidated. In Human enterovirus 71 (strain 7423/MS/87) (EV71), this protein is Genome polyprotein.